Reading from the N-terminus, the 470-residue chain is Cell division protein FtsA (470 aa).

Residues 416 to 470 are disordered; sequence NKKDTHENEVESTDEEIYQSEDNHQEHKQNHEHVQDKDKDKEESKFKKLMKSLFE. Acidic residues predominate over residues 425–434; sequence VESTDEEIYQ. Residues 436-461 show a composition bias toward basic and acidic residues; it reads EDNHQEHKQNHEHVQDKDKDKEESKF.

It belongs to the FtsA/MreB family. Self-interacts. Interacts with FtsZ.

It is found in the cell membrane. Its function is as follows. Cell division protein that is involved in the assembly of the Z ring. May serve as a membrane anchor for the Z ring. This Staphylococcus aureus (strain NCTC 8325 / PS 47) protein is Cell division protein FtsA.